Here is a 296-residue protein sequence, read N- to C-terminus: Nucleotide-binding protein Pnec_1620 (296 aa).

8–15 (GISGSGKS) is a binding site for ATP. GTP is bound at residue 57–60 (DARR).

This sequence belongs to the RapZ-like family.

In terms of biological role, displays ATPase and GTPase activities. The polypeptide is Nucleotide-binding protein Pnec_1620 (Polynucleobacter necessarius subsp. necessarius (strain STIR1)).